A 365-amino-acid chain; its full sequence is 3-isopropylmalate dehydrogenase (365 aa).

Substrate-binding residues include R96, R106, R134, and D224. Residues D224, D248, and D252 each contribute to the Mg(2+) site. An NAD(+)-binding site is contributed by 288–300 (GSAPTIAKQNIAN).

This sequence belongs to the isocitrate and isopropylmalate dehydrogenases family. LeuB type 1 subfamily. Homodimer. Mg(2+) serves as cofactor. The cofactor is Mn(2+).

It is found in the cytoplasm. The enzyme catalyses (2R,3S)-3-isopropylmalate + NAD(+) = 4-methyl-2-oxopentanoate + CO2 + NADH. It participates in amino-acid biosynthesis; L-leucine biosynthesis; L-leucine from 3-methyl-2-oxobutanoate: step 3/4. Functionally, catalyzes the oxidation of 3-carboxy-2-hydroxy-4-methylpentanoate (3-isopropylmalate) to 3-carboxy-4-methyl-2-oxopentanoate. The product decarboxylates to 4-methyl-2 oxopentanoate. The chain is 3-isopropylmalate dehydrogenase from Dehalococcoides mccartyi (strain CBDB1).